Reading from the N-terminus, the 147-residue chain is UPF0306 protein YhbP (147 aa).

This sequence belongs to the UPF0306 family.

This chain is UPF0306 protein YhbP, found in Escherichia coli O8 (strain IAI1).